The chain runs to 433 residues: Shikimate O-hydroxycinnamoyltransferase (433 aa).

The Proton acceptor role is filled by histidine 153. 4-coumaroyl-CoA-binding positions include 252–255, 284–290, and 370–373; these read SSYE, DGRSRLR, and SWVR. Aspartate 380 acts as the Proton acceptor in catalysis.

This sequence belongs to the plant acyltransferase family.

It carries out the reaction shikimate + 4-coumaroyl-CoA = trans-4-coumaroylshikimate + CoA. In terms of biological role, acyltransferase involved in the biosynthesis of lignin. Accepts caffeoyl-CoA and p-coumaroyl-CoA as substrates and transfers the acyl group on both shikimate and quinate acceptors. The polypeptide is Shikimate O-hydroxycinnamoyltransferase (HST) (Arabidopsis thaliana (Mouse-ear cress)).